Here is a 695-residue protein sequence, read N- to C-terminus: UvrABC system protein C (695 aa).

Positions 1-10 (MNHDPAETRD) are enriched in basic and acidic residues. Positions 1 to 44 (MNHDPAETRDTAAAPLADTESPSPVSPELTPHPAPAAQDIDTAT) are disordered. The GIY-YIG domain maps to 88 to 166 (TSPGVYRMLN…IKQLRPRFNV (79 aa)). One can recognise a UVR domain in the interval 276-311 (RAVKQELAVEMEKASNELEFETAALYRDRLAALSAI).

It belongs to the UvrC family. Interacts with UvrB in an incision complex.

It is found in the cytoplasm. Its function is as follows. The UvrABC repair system catalyzes the recognition and processing of DNA lesions. UvrC both incises the 5' and 3' sides of the lesion. The N-terminal half is responsible for the 3' incision and the C-terminal half is responsible for the 5' incision. The protein is UvrABC system protein C of Rhodopseudomonas palustris (strain HaA2).